A 735-amino-acid chain; its full sequence is Diacylglycerol kinase alpha (735 aa).

2 consecutive EF-hand domains span residues 110 to 145 (RPEDKLEFTFKLYDTDRNGILDSSEVDKIILQMMRV) and 155 to 190 (ELRPILQEMMKEIDYDGSGSVSQAEWVRAGATTVPL). Aspartate 123, aspartate 125, asparagine 127, glutamate 134, aspartate 168, aspartate 170, serine 172, serine 174, and glutamate 179 together coordinate Ca(2+). 2 consecutive Phorbol-ester/DAG-type zinc fingers follow at residues 205–253 (QHMW…ALPC) and 269–319 (SHVW…GHEC). The DAGKc domain occupies 372 to 506 (PNTHPLLVFV…MDRWSVEVIP (135 aa)). Residue lysine 484 is modified to N6-acetyllysine.

The protein belongs to the eukaryotic diacylglycerol kinase family. In terms of assembly, monomer. As to expression, expressed in lymphocytes.

It is found in the cytoplasm. Its subcellular location is the cytosol. The enzyme catalyses a 1,2-diacyl-sn-glycerol + ATP = a 1,2-diacyl-sn-glycero-3-phosphate + ADP + H(+). It carries out the reaction a 1-O-alkyl-sn-glycerol + ATP = a 1-O-alkyl-sn-glycero-3-phosphate + ADP + H(+). The catalysed reaction is 1-O-alkyl-2-acyl-sn-glycerol + ATP = 1-O-alkyl-2-acyl-sn-glycero-3-phosphate + ADP + H(+). It catalyses the reaction 1,2-dihexadecanoyl-sn-glycerol + ATP = 1,2-dihexadecanoyl-sn-glycero-3-phosphate + ADP + H(+). The enzyme catalyses 1-hexadecanoyl-2-(9Z-octadecenoyl)-sn-glycerol + ATP = 1-hexadecanoyl-2-(9Z-octadecenoyl)-sn-glycero-3-phosphate + ADP + H(+). It carries out the reaction 2-(9Z-octadecenoyl)-glycerol + ATP = 2-(9Z-octadecenoyl)-sn-glycero-3-phosphate + ADP + H(+). The catalysed reaction is 1,2-di-(9Z-octadecenoyl)-sn-glycerol + ATP = 1,2-di-(9Z-octadecenoyl)-sn-glycero-3-phosphate + ADP + H(+). It catalyses the reaction 1-octadecanoyl-2-(5Z,8Z,11Z,14Z-eicosatetraenoyl)-sn-glycerol + ATP = 1-octadecanoyl-2-(5Z,8Z,11Z,14Z-eicosatetraenoyl)-sn-glycero-3-phosphate + ADP + H(+). The enzyme catalyses 1,2-didecanoyl-sn-glycerol + ATP = 1,2-didecanoyl-sn-glycero-3-phosphate + ADP + H(+). It carries out the reaction 1-O-hexadecyl-2-acetyl-sn-glycerol + ATP = 1-O-hexadecyl-2-acetyl-sn-glycero-3-phosphate + ADP + H(+). The catalysed reaction is 1-O-hexadecyl-2-(5Z,8Z,11Z,14Z-eicosatetraenoyl)-sn-glycerol + ATP = 1-O-hexadecyl-2-(5Z,8Z,11Z,14Z-eicosatetraenoyl)-sn-glycero-3-phosphate + ADP + H(+). It catalyses the reaction 1-O-hexadecyl-2-(9Z-octadecenoyl)-sn-glycerol + ATP = 1-O-hexadecyl-2-(9Z-octadecenoyl)-sn-glycero-3-phosphate + ADP + H(+). The enzyme catalyses 1-O-hexadecyl-sn-glycerol + ATP = 1-O-hexadecyl-sn-glycero-3-phosphate + ADP + H(+). The protein operates within lipid metabolism; glycerolipid metabolism. Its activity is regulated as follows. Stimulated by calcium and phosphatidylserine. Diacylglycerol kinase that converts diacylglycerol/DAG into phosphatidic acid/phosphatidate/PA and regulates the respective levels of these two bioactive lipids. Thereby, acts as a central switch between the signaling pathways activated by these second messengers with different cellular targets and opposite effects in numerous biological processes. Also plays an important role in the biosynthesis of complex lipids. Can also phosphorylate 1-alkyl-2-acylglycerol in vitro as efficiently as diacylglycerol provided it contains an arachidonoyl group. Also involved in the production of alkyl-lysophosphatidic acid, another bioactive lipid, through the phosphorylation of 1-alkyl-2-acetyl glycerol. The chain is Diacylglycerol kinase alpha (DGKA) from Homo sapiens (Human).